Here is a 463-residue protein sequence, read N- to C-terminus: Eukaryotic translation initiation factor 3 subunit E (463 aa).

The PCI domain maps to 224-407; sequence FNLGENQGCQ…NMLHITRPHA (184 aa). A disordered region spans residues 432–463; it reads QSSVGEPRERGERGERGNKGGRGRPRTQEVAA. Basic and acidic residues predominate over residues 437-449; it reads EPRERGERGERGN.

Belongs to the eIF-3 subunit E family. Component of the eukaryotic translation initiation factor 3 (eIF-3) complex.

The protein localises to the cytoplasm. In terms of biological role, component of the eukaryotic translation initiation factor 3 (eIF-3) complex, which is involved in protein synthesis of a specialized repertoire of mRNAs and, together with other initiation factors, stimulates binding of mRNA and methionyl-tRNAi to the 40S ribosome. The eIF-3 complex specifically targets and initiates translation of a subset of mRNAs involved in cell proliferation. The sequence is that of Eukaryotic translation initiation factor 3 subunit E from Cryptococcus neoformans var. neoformans serotype D (strain JEC21 / ATCC MYA-565) (Filobasidiella neoformans).